We begin with the raw amino-acid sequence, 568 residues long: Cyclin-dependent kinase-like 2 (568 aa).

Residues 4–289 (YENLGLVGEG…CADLLRHDFF (286 aa)) enclose the Protein kinase domain. Residues 10–18 (VGEGSYGMV) and K33 contribute to the ATP site. Positions 45–51 (KKIAMRE) match the [NKR]KIAxRE motif. The active-site Proton acceptor is the D126. 2 disordered regions span residues 309 to 333 (DARN…LGEE) and 545 to 568 (SHQG…EHQH). The segment covering 322 to 333 (RKKEKDDALGEE) has biased composition (basic and acidic residues).

The protein belongs to the protein kinase superfamily. CMGC Ser/Thr protein kinase family. CDC2/CDKX subfamily. As to expression, expressed in testis, kidney, lung and brain.

It localises to the cytoplasm. Its subcellular location is the nucleus. It catalyses the reaction L-seryl-[protein] + ATP = O-phospho-L-seryl-[protein] + ADP + H(+). The enzyme catalyses L-threonyl-[protein] + ATP = O-phospho-L-threonyl-[protein] + ADP + H(+). This chain is Cyclin-dependent kinase-like 2, found in Mus musculus (Mouse).